The primary structure comprises 250 residues: UDP-2,3-diacylglucosamine hydrolase (250 aa).

Positions 8, 10, 41, 79, and 114 each coordinate Mn(2+). 79–80 (NR) contributes to the substrate binding site. Substrate-binding residues include Asp-122, Ser-160, Asp-172, Gln-175, and His-203. Residues His-203 and His-205 each coordinate Mn(2+).

The protein belongs to the LpxH family. The cofactor is Mn(2+).

The protein localises to the cell inner membrane. The enzyme catalyses UDP-2-N,3-O-bis[(3R)-3-hydroxytetradecanoyl]-alpha-D-glucosamine + H2O = 2-N,3-O-bis[(3R)-3-hydroxytetradecanoyl]-alpha-D-glucosaminyl 1-phosphate + UMP + 2 H(+). Its pathway is glycolipid biosynthesis; lipid IV(A) biosynthesis; lipid IV(A) from (3R)-3-hydroxytetradecanoyl-[acyl-carrier-protein] and UDP-N-acetyl-alpha-D-glucosamine: step 4/6. Its function is as follows. Hydrolyzes the pyrophosphate bond of UDP-2,3-diacylglucosamine to yield 2,3-diacylglucosamine 1-phosphate (lipid X) and UMP by catalyzing the attack of water at the alpha-P atom. Involved in the biosynthesis of lipid A, a phosphorylated glycolipid that anchors the lipopolysaccharide to the outer membrane of the cell. The chain is UDP-2,3-diacylglucosamine hydrolase from Xylella fastidiosa (strain M12).